The primary structure comprises 73 residues: Beta-1 adrenergic receptor (73 aa).

A helical transmembrane segment spans residues Ile-1–Met-12. The Extracellular portion of the chain corresponds to His-13–Arg-38. A disulfide bond links Cys-25 and Cys-31. Residues Ala-39–Phe-64 traverse the membrane as a helical segment. Ser-44 is a cyanopindolol binding site. The Cytoplasmic portion of the chain corresponds to Arg-65–Lys-73.

Belongs to the G-protein coupled receptor 1 family. Adrenergic receptor subfamily. ADRB1 sub-subfamily. In terms of assembly, interacts (via C-terminus PDZ motif) with RAPGEF2; the interaction is direct. Interacts with GOPC, MAGI3 and DLG4. In terms of processing, homologous desensitization of the receptor is mediated by its phosphorylation by beta-adrenergic receptor kinase.

It localises to the cell membrane. The protein localises to the early endosome. Its function is as follows. Beta-adrenergic receptors mediate the catecholamine-induced activation of adenylate cyclase through the action of G proteins. This receptor binds epinephrine and norepinephrine with approximately equal affinity. Mediates Ras activation through G(s)-alpha- and cAMP-mediated signaling. In dorsal pons neurons, involved in the regulation of sleep/wake behaviors. In Meriones unguiculatus (Mongolian jird), this protein is Beta-1 adrenergic receptor (ADRB1).